The chain runs to 472 residues: Methanethiol oxidase (472 aa).

This sequence belongs to the selenium-binding protein family.

Its subcellular location is the nucleus. The protein localises to the cytoplasm. It localises to the cytosol. The protein resides in the membrane. The catalysed reaction is methanethiol + O2 + H2O = hydrogen sulfide + formaldehyde + H2O2 + H(+). It participates in organosulfur degradation. Functionally, catalyzes the oxidation of methanethiol, an organosulfur compound known to be produced in substantial amounts by gut bacteria. Selenium-binding protein which may be involved in the sensing of reactive xenobiotics in the cytoplasm. May be involved in intra-Golgi protein transport. The sequence is that of Methanethiol oxidase (selenbp1-a) from Xenopus laevis (African clawed frog).